A 426-amino-acid polypeptide reads, in one-letter code: Phosphomethylpyrimidine synthase (426 aa).

Residues M94, Y123, H162, 184 to 186 (SRG), 225 to 228 (NGMR), and E264 contribute to the substrate site. A Zn(2+)-binding site is contributed by H268. Residue Y291 participates in substrate binding. H332 contributes to the Zn(2+) binding site. C406, C409, and C413 together coordinate [4Fe-4S] cluster.

It belongs to the ThiC family. The cofactor is [4Fe-4S] cluster.

It carries out the reaction 5-amino-1-(5-phospho-beta-D-ribosyl)imidazole + S-adenosyl-L-methionine = 4-amino-2-methyl-5-(phosphooxymethyl)pyrimidine + CO + 5'-deoxyadenosine + formate + L-methionine + 3 H(+). Its pathway is cofactor biosynthesis; thiamine diphosphate biosynthesis. Its function is as follows. Catalyzes the synthesis of the hydroxymethylpyrimidine phosphate (HMP-P) moiety of thiamine from aminoimidazole ribotide (AIR) in a radical S-adenosyl-L-methionine (SAM)-dependent reaction. The chain is Phosphomethylpyrimidine synthase from Methanospirillum hungatei JF-1 (strain ATCC 27890 / DSM 864 / NBRC 100397 / JF-1).